The primary structure comprises 359 residues: MSKFSFNINHQYKKARSGIITTAHGNIRTPAFMPVGTRGTVKAMLPESVAETGADILLGNTYHLMLQPSAERIAKLGGLHKFMNWGKPILTDSGGFQVMSLSKLRKITEEGVSFNSHINGDKYLLTPERSTEIQHLLGSTITMAFDECTPYPATFEEAKTSMQLTTRWAHRSREAFVKRDGYAQFGIIQGSTYEELREQSAKDLIELDFEGYAIGGLAVGEGQELMFKVLAPDFLPQNKPRYLMGVGKPADIIGAVSRGVDMFDCVIPTRSGRNGQAFTKYGTVNIRNSKYAEDNDPLEADCLCPACQNYSKAYLHHLVRIGEILGAMLMTWHNLTYFQNLMSRIREYIALGKDFDFTT.

Aspartate 92 functions as the Proton acceptor in the catalytic mechanism. Substrate-binding positions include 92-96, aspartate 146, glutamine 189, and glycine 216; that span reads DSGGF. Positions 245–251 are RNA binding; the sequence is GVGKPAD. The Nucleophile role is filled by aspartate 264. The segment at 269-273 is RNA binding; important for wobble base 34 recognition; it reads TRSGR. Residues cysteine 302, cysteine 304, cysteine 307, and histidine 333 each contribute to the Zn(2+) site.

Belongs to the queuine tRNA-ribosyltransferase family. Homodimer. Within each dimer, one monomer is responsible for RNA recognition and catalysis, while the other monomer binds to the replacement base PreQ1. Zn(2+) is required as a cofactor.

The enzyme catalyses 7-aminomethyl-7-carbaguanine + guanosine(34) in tRNA = 7-aminomethyl-7-carbaguanosine(34) in tRNA + guanine. It participates in tRNA modification; tRNA-queuosine biosynthesis. Its function is as follows. Catalyzes the base-exchange of a guanine (G) residue with the queuine precursor 7-aminomethyl-7-deazaguanine (PreQ1) at position 34 (anticodon wobble position) in tRNAs with GU(N) anticodons (tRNA-Asp, -Asn, -His and -Tyr). Catalysis occurs through a double-displacement mechanism. The nucleophile active site attacks the C1' of nucleotide 34 to detach the guanine base from the RNA, forming a covalent enzyme-RNA intermediate. The proton acceptor active site deprotonates the incoming PreQ1, allowing a nucleophilic attack on the C1' of the ribose to form the product. After dissociation, two additional enzymatic reactions on the tRNA convert PreQ1 to queuine (Q), resulting in the hypermodified nucleoside queuosine (7-(((4,5-cis-dihydroxy-2-cyclopenten-1-yl)amino)methyl)-7-deazaguanosine). The protein is Queuine tRNA-ribosyltransferase of Rickettsia bellii (strain RML369-C).